The primary structure comprises 245 residues: AP-1-like transcription factor YAP7 (245 aa).

The segment at 1-144 is disordered; sequence MRQRRSVVAV…NRDAQRAYRE (144 aa). Polar residues predominate over residues 74 to 94; that stretch reads SANNDGSSKIKKVQTSNQKDQ. Composition is skewed to basic and acidic residues over residues 95-114 and 135-144; these read MTTKDHENEGAKGHEGKSDD and NRDAQRAYRE. In terms of domain architecture, bZIP spans 125-188; the sequence is VDSVEKRRRQ…SDTKENLQKS (64 aa). The interval 130-149 is basic motif; that stretch reads KRRRQNRDAQRAYRERRTTR. The segment at 153–181 is leucine-zipper; that stretch reads LEEKVEMLHNLVDDWQRKYKLLESEFSDT.

The protein belongs to the bZIP family. YAP subfamily. Homodimer.

Its subcellular location is the nucleus. Probable transcription activator linked to cell cycle that induces transcription activation of genes in the environmental stress response and metabolism control pathways, like the closely related YAP5. The polypeptide is AP-1-like transcription factor YAP7 (YAP7) (Saccharomyces cerevisiae (strain ATCC 204508 / S288c) (Baker's yeast)).